The following is an 851-amino-acid chain: MIQQKVLFISLVAVTLGLGLGLGLKESVQPQVSCRYRCNETFSKMASGCSCDDKCTERQACCSDYEDTCVLPTQSWSCSKLRCGEKRIANVLCSCSDDCLEKKDCCTDYKSICKGETSWLKDKCASSGATQCPAGFEQSPLILFSMDGFRAGYLENWDSLMPNINKLKTCGTHAKYMRAVYPTKTFVNHYTIATGLYPESHGIIDNNIYDVNLNLNFSLSSSTARNPAWWGGQPIWHTATYQGLKAATYFWPGSEVKINGSYPTIFKNYNKSIPFEARVTEVLKWLDLPKAKRPDFLTLYIEEPDTTGHKYGPVSGEIIKALQMADRTLGMLMEGLKQRNLHNCVNLILLADHGMEEISCDRLEYMANYFNNVDFFMYEGPAPRIRSKNVPKDFYTFDSEGIVKNLTCRKPKQYFKAYLSKDLPKRLHYANNIRIDKVNLMVDQQWMAVRDKKFTRCKGGTHGYDNEFKSMQAIFLAHGPGFNEKNEVTSFENIEVYNLMCDLLKLKPAPNNGTHGSLNHLLKNPFYTPSPAKEQSSPLSCPFGPVPSPDVSGCKCSSITELEKVNQRLNLNNQAKTESEAHNLPYGRPQVLQNHSKYCLLHQAKYISAYSQDILMPLWSSYTIYRSTSTSVPPSASDCLRLDVRIPAAQSQTCSNYQPDLTITPGFLYPPNFNSSNFEQYDALITSNIVPMFKGFTRLWNYFHTTLIPKYARERNGLNVISGPIFDYNYDGHFDSYDTIKQHVNNTKIPIPTHYFVVLTSCENQINTPLNCLGPLKVLSFILPHRPDNSESCADTSPENLWVEERIQIHTARVRDVELLTGLNFYSGLKQPLPETLQLKTFLPIFVNPVN.

Positions 1–23 are cleaved as a signal peptide; the sequence is MIQQKVLFISLVAVTLGLGLGLG. 2 consecutive SMB domains span residues 30-73 and 74-118; these read PQVS…VLPT and QSWS…GETS. 16 cysteine pairs are disulfide-bonded: Cys-34–Cys-38, Cys-34–Cys-51, Cys-38–Cys-69, Cys-49–Cys-51, Cys-49–Cys-62, Cys-55–Cys-61, Cys-62–Cys-69, Cys-78–Cys-83, Cys-78–Cys-95, Cys-83–Cys-113, Cys-93–Cys-95, Cys-93–Cys-106, Cys-99–Cys-105, Cys-106–Cys-113, Cys-124–Cys-170, and Cys-132–Cys-344. Residue Asn-39 is glycosylated (N-linked (GlcNAc...) asparagine). Positions 58–60 match the Cell attachment site motif; that stretch reads RQA. 2 residues coordinate a divalent metal cation: Asp-147 and Thr-185. The AMP-threonine intermediate role is filled by Thr-185. N-linked (GlcNAc...) asparagine glycosylation is found at Asn-216, Asn-259, and Asn-270. Lys-271 lines the AMP pocket. A divalent metal cation contacts are provided by Asp-305, His-309, Asp-352, and His-353. An AMP-binding site is contributed by His-309. Disulfide bonds link Cys-360-Cys-457, Cys-408-Cys-793, Cys-541-Cys-599, Cys-554-Cys-654, Cys-556-Cys-639, and Cys-762-Cys-772. Residue Asn-405 is glycosylated (N-linked (GlcNAc...) asparagine). An a divalent metal cation-binding site is contributed by His-462. 4 N-linked (GlcNAc...) asparagine glycosylation sites follow: Asn-512, Asn-594, Asn-674, and Asn-745.

This sequence belongs to the nucleotide pyrophosphatase/phosphodiesterase family. In terms of assembly, monomer cleaved in two subunits; disulfide-linked. Is synthesized as a single-chain protein and is subsequently cleaved to form a two-subunit protein held together with disulfide bonds. The cofactor is a divalent metal cation. Expressed by venom gland.

Its subcellular location is the secreted. The catalysed reaction is ADP + H2O = AMP + phosphate + H(+). Hydrolyzes ADP with high activity. Shows weak or no activity on 5'-AMP, 5'-GMP, 3'-AMP, ATP, cAMP, and cGMP. Is devoid of monophosphatase and proteinase activities. Dose-dependently inhibits platelet aggregation induced by ADP and collagen. This Crotalus adamanteus (Eastern diamondback rattlesnake) protein is Venom phosphodiesterase 1.